The primary structure comprises 371 residues: Gamma-tocopherol methyltransferase, chloroplastic (371 aa).

A chloroplast-targeting transit peptide spans 1 to 65 (MAAAPVFFPS…NSNRIASRLQ (65 aa)). Residues 153–162 (IVDVGCGIGG) are SAM motif I. An SAM motif II region spans residues 216–224 (GQFDLVWSM). The tract at residues 243–252 (VAAPGATIII) is SAM motif III.

This sequence belongs to the class I-like SAM-binding methyltransferase superfamily. gTMT family. In terms of assembly, homodimer.

Its subcellular location is the plastid. It localises to the chloroplast inner membrane. The catalysed reaction is picrinine + S-adenosyl-L-methionine = ervincine + S-adenosyl-L-homocysteine + H(+). Its pathway is alkaloid biosynthesis; vindoline biosynthesis. Functionally, S-adenosyl-L-methionine-dependent N-methyltransferase involved in the biosynthesis of biologically active monoterpenoid indole alkaloids (MIAs) natural products including vindoline. Inactive with picrinine as substrate. The polypeptide is Gamma-tocopherol methyltransferase, chloroplastic (Catharanthus roseus (Madagascar periwinkle)).